A 370-amino-acid polypeptide reads, in one-letter code: Uroporphyrinogen decarboxylase (370 aa).

Residues 29–33 (RQAGR), Asp-79, Tyr-155, Ser-210, and His-342 contribute to the substrate site.

This sequence belongs to the uroporphyrinogen decarboxylase family. As to quaternary structure, homodimer.

It is found in the cytoplasm. The catalysed reaction is uroporphyrinogen III + 4 H(+) = coproporphyrinogen III + 4 CO2. Its pathway is porphyrin-containing compound metabolism; protoporphyrin-IX biosynthesis; coproporphyrinogen-III from 5-aminolevulinate: step 4/4. Its function is as follows. Catalyzes the decarboxylation of four acetate groups of uroporphyrinogen-III to yield coproporphyrinogen-III. This Variovorax paradoxus (strain S110) protein is Uroporphyrinogen decarboxylase.